Reading from the N-terminus, the 304-residue chain is Type II restriction enzyme LlaDCHI (304 aa).

Belongs to the DpnII type II restriction endonuclease family.

The enzyme catalyses Endonucleolytic cleavage of DNA to give specific double-stranded fragments with terminal 5'-phosphates.. In terms of biological role, a P subtype restriction enzyme that recognizes the double-stranded unmethylated sequence 5'-GATC-3' and cleaves before G-1. This Lactococcus lactis subsp. cremoris (Streptococcus cremoris) protein is Type II restriction enzyme LlaDCHI (llaDCHIR).